The chain runs to 632 residues: Extracellular metalloproteinase 2 (632 aa).

A signal peptide spans 1-19; that stretch reads MHGLLLAGLAAALPLGVAG. Residues 20-244 constitute a propeptide that is removed on maturation; that stretch reads LPARQQSGLS…VHNVVDYVAS (225 aa). N-linked (GlcNAc...) asparagine glycosylation is present at Asn-270. His-429 serves as a coordination point for Zn(2+). The active site involves Glu-430. His-433 provides a ligand contact to Zn(2+).

Belongs to the peptidase M36 family. Zn(2+) serves as cofactor.

The protein localises to the secreted. Functionally, secreted metalloproteinase probably acting as a virulence factor. This Trichophyton rubrum (Athlete's foot fungus) protein is Extracellular metalloproteinase 2 (MEP2).